Consider the following 458-residue polypeptide: BUD13 homolog (458 aa).

3 disordered regions span residues 16-37 (SGDI…SGLR), 81-328 (KQTF…TEEL), and 437-458 (AKTE…AEYE). Over residues 138-148 (NRHDSDKDNSP) the composition is skewed to basic and acidic residues. 2 stretches are compositionally biased toward basic residues: residues 175-185 (RNRRSPPRTRR) and 208-218 (PRRRPSSPARR). Composition is skewed to basic and acidic residues over residues 219-243 (RKDD…KKEE), 266-284 (RDLK…KMFE), and 314-328 (DQAK…TEEL). A coiled-coil region spans residues 262 to 356 (LQSARDLKEE…AQLEEMARVA (95 aa)).

This sequence belongs to the CWC26 family.

The protein is BUD13 homolog of Caenorhabditis elegans.